The sequence spans 95 residues: Protein TusB (95 aa).

Belongs to the DsrH/TusB family. Heterohexamer, formed by a dimer of trimers. The hexameric TusBCD complex contains 2 copies each of TusB, TusC and TusD. The TusBCD complex interacts with TusE.

Its subcellular location is the cytoplasm. Functionally, part of a sulfur-relay system required for 2-thiolation of 5-methylaminomethyl-2-thiouridine (mnm(5)s(2)U) at tRNA wobble positions. In Klebsiella pneumoniae subsp. pneumoniae (strain ATCC 700721 / MGH 78578), this protein is Protein TusB.